Reading from the N-terminus, the 205-residue chain is SREBP regulating gene protein (205 aa).

Residues 1-16 lie on the Cytoplasmic side of the membrane; that stretch reads MVNLAAMVWRRLLRKR. A helical membrane pass occupies residues 17-35; sequence WVLALVFGLSLVYFLTSTF. Topologically, residues 36–205 are lumenal; the sequence is KQEERAVRDR…GESPPELFPA (170 aa). N-linked (GlcNAc...) asparagine glycosylation is present at Asn-67.

Belongs to the SPRING family. Interacts with SCAP.

The protein localises to the golgi apparatus membrane. In terms of biological role, positively regulates hepatic SREBP signaling pathway by modulating the proper localization of SCAP (SREBP cleavage-activating protein) to the endoplasmic reticulum, thereby controlling the level of functional SCAP. The polypeptide is SREBP regulating gene protein (Bos taurus (Bovine)).